The primary structure comprises 224 residues: UPF0758 protein Bpro_0948 (224 aa).

The 123-residue stretch at Leu102 to Leu224 folds into the MPN domain. Positions 173, 175, and 186 each coordinate Zn(2+). The JAMM motif signature appears at His173–Asp186.

It belongs to the UPF0758 family.

In Polaromonas sp. (strain JS666 / ATCC BAA-500), this protein is UPF0758 protein Bpro_0948.